The following is a 222-amino-acid chain: Peroxiredoxin (222 aa).

Positions 7–163 (PRLGEPAPAF…VIRLVDALQT (157 aa)) constitute a Thioredoxin domain. The active-site Cysteine sulfenic acid (-SOH) intermediate is C49. Substrate is bound at residue R126. The cysteines at positions 212 and 218 are disulfide-linked.

This sequence belongs to the peroxiredoxin family. Prx6 subfamily. In terms of assembly, homodecamer. Pentamer of dimers that assemble into a ring structure.

Its subcellular location is the cytoplasm. It carries out the reaction a hydroperoxide + [thioredoxin]-dithiol = an alcohol + [thioredoxin]-disulfide + H2O. In terms of biological role, thiol-specific peroxidase that catalyzes the reduction of hydrogen peroxide and organic hydroperoxides to water and alcohols, respectively. Plays a role in cell protection against oxidative stress by detoxifying peroxides. This chain is Peroxiredoxin, found in Aquifex aeolicus (strain VF5).